Reading from the N-terminus, the 1978-residue chain is MWIPTEHEKYGVVIASFRGTVPYGLSLEIGDTVQILEKCDGWYRGFALKNPNIKGIFPSSYVHLKNACVKNKGQFEMVIPTEDSVITEMTSTLRDWGTMWKQLYVRNEGDLFHRLWHIMNEILDLRRQVLVGHLTHDRMKDVKRHITARLDWGNEQLGLDLVPRKEYAMVDPEDISITELYRLMEHRHRKKDTPVQASSHHLFVQMKSLMCSNLGEELEVIFSLFDSKENRPISERFFLRLNRNGLPKAPDKPERHCSLFVDLGSSELRKDIYITVHIIRIGRMGAGEKKNACSVQYRRPFGCAVLSIADLLTGETKDDLVLKVYMCNTESEWYQIHENIIKKLNARYNLTGSNAGLAVSLQLLHGDIEQIRREYSSVFSHGVSITRKLGFSDIIMPGEMRNDLYITVERGEFEKGGKSVARNVEVTMFIVDSNGQPLKDFISFGSGEPPASEYHSFVLYHNNSPRWSELLKLPIPVDKFRGSHIRFEFRHCSTKEKGEKKLFGFSFVPLMQEDGRTLPDGTHELIVHKCEENTNLQDTTRYLKLPFSKVIFLGNNNQTMKATKESFWITSFLCSTKLTQNGDMLDLLKWRTHPDKITGCLSKLKEIDGSEIVKFLQDTLDTLFGILDENSQKYGSKVFDSLVHIINLLQDSKFHHFKPVMDTYIESHFAGALAYRDLIKVLKWYVDRITEAERQEHIQEVLKAQEYIFKYIVQSRRLFSLATGGQNEEEFRCCIQELLMSVRFFLSQESKGTGALSQSQAVFLSSFPAVYSELLKLFDVREVANLVQDTLGSLPTIMHVDDSLQAIKLQCIGKTVESQLYTNPDSRYILLPVVLHHLHIHLQEQKDLIMCARILSNVFCLIKKNSSEKSVLEEIDVIVASLLDILLRTILEITSRPQASSSAMRLQFQDVTGEFVACLLSLLRQMTDRHYQQLLNSFSTKEELRDFLLQIFTVFRILIRPEMFPKDWTVMRLVANNVIITTVLYLSDALRKNFLNENFDYKIWDSYFYLAVIFINQLCLQLEMFTPSKKKKVLEKYGDMRVTMGCEIFSMWQNLGEHKLHFIPALIGPFLEVTLIPQPDLRNVMIPIFHDMMDWEQRRSGNFKQVEAKLIDKLDSLMSEGKGDETYRELFNSIIPLFGPYPSLLKKIERETWRESGVSLIATVTRLMERLLDYRDCMKIGEVDGKKIGCTVSLLNFYKTELNKEEMYIRYIHKLYDLHLKAQNFTEAAYTLLLYDELLEWSDRPLREFLTYPMQTEWQRKEHLHLTIIQNFDRGKCWENGIILCRKIAEQYESYYDYRNLSKMRMMEASLYDKIMDQQRLEPEFFRVGFYGKKFPFFLRNKEFVCRGHDYERLEAFQQRMLNEFPHAIAMQHANQPDETIFQAEAQYLQIYAVTPIPESQEVLQREGVPDNIKSFYKVNHIWKFRYDRPFHKGAKDKENEFKSLWVERTSLYLVQSLPGISRWFEVEKREVVEMSPLENAIEVLENKNQQLKTLISQCQTRQMQNINPLTMCLNGVIDAAVNGGVSRYQEAFFVKDYILSHPEDGEKIARLRELMLEQAQILEFGLAVHEKFVPQDMRPLHKKLVDQFFVMKSSFGIQEFPACIQASPVHFPNGSPRVCRNSAPASMSPDGTRVIPRRSPLSYPAVNRYSSSSLSSQASAEVSNITGQSESSDEVFNMQPSPSTSSLSSTHSASPNVTSSAPSSARASPLLSDKHKHSRENSCLSPRDRPCSAIYPTPVEPSQRMLFNHIGDGALPRSDPNLSAPEKAVNPTPSSWSLDSGKEAKNMSDSGKLISPPVPPRPTQTASPARHTTSVSPSPAGRSPLKGSVQSFTPSPVEYNSPGLSSNSPVLSGSYSSGISSLSRCSTSETSGFENQANEQSVPVPVPVPVPVPVPSFSGSEEPVRKESKTPPPYSVYERTLRRPVPLPHSLSIPVTSEPPALPPKPLAARSSHLENGTRRTEPGPRPRPLPRKVSQL.

One can recognise an SH3 domain in the interval 6–67; sequence EHEKYGVVIA…PSSYVHLKNA (62 aa). A Phosphotyrosine modification is found at Y167. Position 193 is a phosphothreonine (T193). The C2 DOCK-type domain occupies 401 to 574; sequence RNDLYITVER…ESFWITSFLC (174 aa). The DOCKER domain maps to 1199 to 1605; that stretch reads KTELNKEEMY…FGIQEFPACI (407 aa). Residues S1608, S1616, S1623, S1627, S1629, and S1640 each carry the phosphoserine modification. Disordered stretches follow at residues 1657-1738 and 1751-1978; these read SQAS…IYPT and IGDG…VSQL. The span at 1681–1712 shows a compositional bias: low complexity; that stretch reads PSPSTSSLSSTHSASPNVTSSAPSSARASPLL. Residue S1778 is modified to Phosphoserine. The SH3-binding motif lies at 1797–1803; the sequence is PPVPPRP. Over residues 1804–1818 the composition is skewed to polar residues; the sequence is TQTASPARHTTSVSP. Residues 1842–1872 are compositionally biased toward low complexity; the sequence is SPGLSSNSPVLSGSYSSGISSLSRCSTSETS. A compositionally biased stretch (polar residues) spans 1873–1882; that stretch reads GFENQANEQS. Pro residues predominate over residues 1885–1895; that stretch reads VPVPVPVPVPV. Residues 1953-1966 show a composition bias toward basic and acidic residues; that stretch reads SHLENGTRRTEPGP.

The protein belongs to the DOCK family. In terms of assembly, interacts with nucleotide-free Rap1; functions as a guanine nucleotide exchange factor (GEF) for Rap1. Interacts (via DOCKER domain) with RAC1; functions as a guanine nucleotide exchange factor (GEF) for RAC1. Interacts with the SH3 domain of CRK. Interacts with FASLG. Interacts with ELMO2 and EPHA2; mediates activation of RAC1 by EPHA2. Interacts with USH1C (via PDZ 1 domain). Expressed in inner ear (at protein level).

The protein resides in the cell membrane. It localises to the cytoplasm. The protein localises to the cytosol. Functions as a guanine nucleotide exchange factor (GEF) that promotes the exchange of GDP to GTP, converting inactive GDP-bound small GTPases into their active GTP-bound form. Involved in regulation of adherens junction between cells. Plays a role in cell migration. In terms of biological role, has a higher guanine nucleotide exchange factor activity compared to other isoforms. This chain is Dedicator of cytokinesis protein 4 (Dock4), found in Mus musculus (Mouse).